We begin with the raw amino-acid sequence, 503 residues long: Cytochrome P450 11B1, mitochondrial (503 aa).

The N-terminal 24 residues, 1 to 24 (MAIWAKAEAWLAGPWLALNRARTL), are a transit peptide targeting the mitochondrion. C450 contributes to the heme binding site.

This sequence belongs to the cytochrome P450 family. It depends on heme as a cofactor.

Its subcellular location is the mitochondrion inner membrane. The catalysed reaction is a steroid + 2 reduced [adrenodoxin] + O2 + 2 H(+) = an 11beta-hydroxysteroid + 2 oxidized [adrenodoxin] + H2O. It catalyses the reaction 11-deoxycortisol + 2 reduced [adrenodoxin] + O2 + 2 H(+) = cortisol + 2 oxidized [adrenodoxin] + H2O. It carries out the reaction 21-hydroxyprogesterone + 2 reduced [adrenodoxin] + O2 + 2 H(+) = corticosterone + 2 oxidized [adrenodoxin] + H2O. The enzyme catalyses corticosterone + 2 reduced [adrenodoxin] + O2 + 2 H(+) = 18-hydroxycorticosterone + 2 oxidized [adrenodoxin] + H2O. The catalysed reaction is 18-hydroxycorticosterone + 2 reduced [adrenodoxin] + O2 + 2 H(+) = aldosterone + 2 oxidized [adrenodoxin] + 2 H2O. It catalyses the reaction 21-hydroxyprogesterone + 2 reduced [adrenodoxin] + O2 + 2 H(+) = 19-hydroxy-11-deoxycorticosterone + 2 oxidized [adrenodoxin] + H2O. It carries out the reaction 19-hydroxy-11-deoxycorticosterone + 2 reduced [adrenodoxin] + O2 + 2 H(+) = 19-oxo-11-deoxycorticosterone + 2 oxidized [adrenodoxin] + 2 H2O. The protein operates within steroid biosynthesis; glucocorticoid biosynthesis. It participates in steroid hormone biosynthesis. A cytochrome P450 monooxygenase that catalyzes the biosynthesis of aldosterone and other adrenal corticoids. Differing from other species (such as human, rat and mice), it is able to catalyze three sequential oxidative reactions of 11-deoxycorticosterone (21-hydroxyprogesterone), namely 11-beta hydroxylation, followed by two successive oxidations at C18 yielding 18-hydroxy and then 18-oxo intermediates, and ending with the formation of aldosterone. Steroid 11beta, 18- and 19-hydroxylase. Mechanistically, uses molecular oxygen inserting one oxygen atom into a substrate and reducing the second into a water molecule. Two electrons are provided by NADPH via a two-protein mitochondrial transfer system comprising flavoprotein FDXR (adrenodoxin/ferredoxin reductase) and nonheme iron-sulfur protein FDX1 or FDX2 (adrenodoxin/ferredoxin). The sequence is that of Cytochrome P450 11B1, mitochondrial (CYP11B1) from Sus scrofa (Pig).